Reading from the N-terminus, the 501-residue chain is Dipeptide and tripeptide permease A (501 aa).

Over 1–21 (MSTANKKPTESVSLNAFKQPK) the chain is Cytoplasmic. Residues 22–44 (AFYLIFSIELWERFGYYGLQGIM) traverse the membrane as a helical segment. Topologically, residues 45–59 (AVYLVKQLGMSEADS) are periplasmic. Residues 60–80 (ITLFSSFSALVYGLVAIGGWL) traverse the membrane as a helical segment. The Cytoplasmic portion of the chain corresponds to 81-89 (GDKILGTKR). A helical membrane pass occupies residues 90–110 (VIMLGAVVLAIGYALVAWSGH). Asp-111 is a topological domain (periplasmic). The helical transmembrane segment at 112-132 (AGIVYMGMAAIAVGNGLFKAN) threads the bilayer. Topologically, residues 133–153 (PSSLLSTCYAKDDPRLDGAFT) are cytoplasmic. A helical membrane pass occupies residues 154 to 174 (MYYMSVNIGSFFSMLATPWLA). Topologically, residues 175 to 178 (ARYG) are periplasmic. The helical transmembrane segment at 179–199 (WSTAFALSVVGMLITVVNFAF) threads the bilayer. Over 200 to 219 (CQRWVKSYGSKPDFEPINFR) the chain is Cytoplasmic. A helical transmembrane segment spans residues 220 to 240 (NLLLTIVGIVVLIAVATWLLH). Residues 241–246 (NQDIAR) lie on the Periplasmic side of the membrane. A helical membrane pass occupies residues 247-267 (MVLGVIALGIVIIFGKEAFSM). Residues 268–274 (HGAARRK) lie on the Cytoplasmic side of the membrane. Residues 275-295 (MIVAFILMLQAIIFFVLYSQM) form a helical membrane-spanning segment. At 296–320 (PTSLNFFAIRNVEHSILGIAFEPEQ) the chain is on the periplasmic side. Residues 321-341 (YQALNPFWIIIGSPILAAIYN) traverse the membrane as a helical segment. Over 342–352 (RMGDTLPMPMK) the chain is Cytoplasmic. Residues 353–373 (FAIGMVLCSGAFLILPLGAKF) traverse the membrane as a helical segment. Topologically, residues 374–383 (ANDAGIVSVN) are periplasmic. A helical transmembrane segment spans residues 384 to 404 (WLIASYGLQSIGELMISGLGL). Residues 405–414 (AMVAQLVPQR) are Cytoplasmic-facing. Residues 415–435 (LMGFIMGSWFLTTAGANIIGG) form a helical membrane-spanning segment. Topologically, residues 436–459 (YVANLMAVPSDVTDPLMSLEVYGR) are periplasmic. The helical transmembrane segment at 460 to 480 (VFMQIGIATAVIAVLMLLTAP) threads the bilayer. Over 481–501 (KLNRMTQDDDTAEKGSKAATV) the chain is Cytoplasmic.

The protein belongs to the major facilitator superfamily. Proton-dependent oligopeptide transporter (POT/PTR) (TC 2.A.17) family. DtpA subfamily.

Its subcellular location is the cell inner membrane. Its function is as follows. Proton-dependent permease that transports di- and tripeptides. This Salmonella typhimurium (strain LT2 / SGSC1412 / ATCC 700720) protein is Dipeptide and tripeptide permease A.